The chain runs to 102 residues: RNA-binding protein Hfq (102 aa).

The Sm domain maps to 9–68; that stretch reads DPFLNALRRERVPVSIYLVNGIKLQGQIESFDQFVILLKNTVSQMVYKHAISTVVPSRPV. A disordered region spans residues 63–102; the sequence is VPSRPVSHHSNNAGGGSSNYHHGGSAQGSSAPQQDSDDAE. A compositionally biased stretch (low complexity) spans 70–86; the sequence is HHSNNAGGGSSNYHHGG.

The protein belongs to the Hfq family. Homohexamer.

Its function is as follows. RNA chaperone that binds small regulatory RNA (sRNAs) and mRNAs to facilitate mRNA translational regulation in response to envelope stress, environmental stress and changes in metabolite concentrations. Also binds with high specificity to tRNAs. The polypeptide is RNA-binding protein Hfq (Klebsiella pneumoniae (strain 342)).